The following is a 393-amino-acid chain: Probable chromate transport protein (393 aa).

10 consecutive transmembrane segments (helical) span residues 22–42 (YFLKLGALGFGGPIALVGYMH), 90–110 (ALVGLAFVLPSFLIVVALGWA), 119–139 (WMQAVFYGVGAAVIGIIAISA), 146–166 (TVGTSWLLWSIYLVNAATTIV), 201–221 (FIGLPLIPLFAAVPTATTSLL), 231–251 (AGAFVFGSGLAIVPFLYGGVV), 261–281 (QFLDAVAVAMITPGPVVITTG), 282–302 (FIGFLVAGFPGACVAAIAMFI), 327–347 (FVNGVTVAATGAIAGAVVVLG), and 370–390 (LGKKLPEPLIIVIAAIAGVIF).

This sequence belongs to the chromate ion transporter (CHR) (TC 2.A.51) family.

The protein resides in the cell membrane. May function in the active transport of chromate into the cell under sulfur-deficient conditions. The polypeptide is Probable chromate transport protein (srpC) (Synechococcus elongatus (strain ATCC 33912 / PCC 7942 / FACHB-805) (Anacystis nidulans R2)).